We begin with the raw amino-acid sequence, 262 residues long: Hydroxyethylthiazole kinase (262 aa).

Residue Met50 coordinates substrate. Residues Arg125 and Thr171 each coordinate ATP. Residue Gly198 participates in substrate binding.

It belongs to the Thz kinase family. The cofactor is Mg(2+).

The catalysed reaction is 5-(2-hydroxyethyl)-4-methylthiazole + ATP = 4-methyl-5-(2-phosphooxyethyl)-thiazole + ADP + H(+). It participates in cofactor biosynthesis; thiamine diphosphate biosynthesis; 4-methyl-5-(2-phosphoethyl)-thiazole from 5-(2-hydroxyethyl)-4-methylthiazole: step 1/1. Functionally, catalyzes the phosphorylation of the hydroxyl group of 4-methyl-5-beta-hydroxyethylthiazole (THZ). This Shigella sonnei (strain Ss046) protein is Hydroxyethylthiazole kinase.